The following is a 799-amino-acid chain: MEIPKLLPARGTLQGGGGGGIPAGGGRVHRGPDSPAGQVPTRRLLLPRGPQDGGPGRRREEASTASRGPGPSLFAPRPHQPSGGGDDFFLVLLDPVGGDVETAGSGQAAGPVLREEAKAGPGLQGDESGANPAGCSAQGPHCLSAVPTPAPISAPGPAAAFAGTVTIHNQDLLLRFENGVLTLATPPPHAWEPGAAPAQQPRCLIAPQAGFPQAAHPGDCPELRSDLLLAEPAEPAPAPAPQEEAEGLAAALGPRGLLGSGPGVVLYLCPEALCGQTFAKKHQLKMHLLTHSSSQGQRPFKCPLGGCGWTFTTSYKLKRHLQSHDKLRPFGCPAEGCGKSFTTVYNLKAHMKGHEQENSFKCEVCEESFPTQAKLGAHQRSHFEPERPYQCAFSGCKKTFITVSALFSHNRAHFREQELFSCSFPGCSKQYDKACRLKIHLRSHTGERPFLCDFDGCGWNFTSMSKLLRHKRKHDDDRRFMCPVEGCGKSFTRAEHLKGHSITHLGTKPFVCPVAGCCARFSARSSLYIHSKKHLQDVDTWKSRCPISSCNKLFTSKHSMKTHMVKRHKVGQDLLAQLEAANSLTPSSELTSQRQNDLSDAEIVSLFSDVPDSTSAALLDTALVNSGILTIDVASVSSTLAGHLPANNNNSVGQAVDPPSLMATSDPPQSLDTSLFFGTAATGFQQSSLNMDEVSSVSVGPLGSLDSLAMKNSSPEPQALTPSSKLTVDTDTLTPSSTLCENSVSELLTPAKAEWSVHPNSDFFGQEGETQFGFPNAAGNHGSQKERNLITVTGSSFLV.

The segment at 1–89 is disordered; the sequence is MEIPKLLPAR…QPSGGGDDFF (89 aa). A compositionally biased stretch (gly residues) spans 13 to 26; sequence LQGGGGGGIPAGGG. C2H2-type zinc fingers lie at residues 267 to 291, 300 to 324, 330 to 354, 360 to 382, 389 to 413, 420 to 444, 450 to 474, 480 to 504, 510 to 534, and 543 to 568; these read YLCPEALCGQTFAKKHQLKMHLLTH, FKCPLGGCGWTFTTSYKLKRHLQSH, FGCPAEGCGKSFTTVYNLKAHMKGH, FKCEVCEESFPTQAKLGAHQRSH, YQCAFSGCKKTFITVSALFSHNRAH, FSCSFPGCSKQYDKACRLKIHLRSH, FLCDFDGCGWNFTSMSKLLRHKRKH, FMCPVEGCGKSFTRAEHLKGHSITH, FVCPVAGCCARFSARSSLYIHSKKH, and SRCPISSCNKLFTSKHSMKTHMVKRH. The interval 267–573 is required for interaction with ZXDC; that stretch reads YLCPEALCGQ…MVKRHKVGQD (307 aa). The required for transcriptional activation stretch occupies residues 572–699; sequence QDLLAQLEAA…NMDEVSSVSV (128 aa).

It belongs to the ZXD family. In terms of assembly, self-associates. Interacts with ZXDC and CIITA. As to expression, may be expressed in brain, heart, kidney, liver, lung, muscle and placenta.

The protein localises to the nucleus. Functionally, cooperates with CIITA to promote transcription of MHC class I and MHC class II genes. This chain is Zinc finger X-linked protein ZXDA (ZXDA), found in Homo sapiens (Human).